The chain runs to 235 residues: Iron-sulfur cluster co-chaperone protein HscB (235 aa).

Positions 41, 44, 58, and 61 each coordinate a divalent metal cation. The region spanning 72-144 (DYFSLMDCNR…LSRGLYLLKL (73 aa)) is the J domain.

The protein belongs to the HscB family. As to quaternary structure, interacts with ISCU and HSPA9 to form an iron-sulfur transfer complex. Interacts with SDHAF1 (via the first LYR motif); the interaction recruits the iron-sulfur transfer complex composed of HSC20, HSPA9 and ISCU and mediates the incorporation of iron-sulfur clusters into SDHB which also interacts with HSC20. Interacts with the cytoplasmic form of ISCU and with CIA complex member CIAO1 (via LYR motif). Homodimer. Interacts with ISCU (cytoplasmic form); this interaction stabilizes the (Fe-S) clusters on ISCU. Interacts with the CIA complex member CIAO1 (via LYR motif). As to expression, expressed in lung, brain, stomach, spleen, ovary, testis, liver, muscle and heart.

The protein localises to the cytoplasm. It is found in the mitochondrion. Its pathway is cofactor biosynthesis; iron-sulfur cluster biosynthesis. Acts as a co-chaperone in iron-sulfur cluster assembly in mitochondria. Required for incorporation of iron-sulfur clusters into SDHB, the iron-sulfur protein subunit of succinate dehydrogenase that is involved in complex II of the mitochondrial electron transport chain. Recruited to SDHB by interaction with SDHAF1 which first binds SDHB and then recruits the iron-sulfur transfer complex formed by HSC20, HSPA9 and ISCU through direct binding to HSC20. Plays an essential role in hematopoiesis. Its function is as follows. Acts as a co-chaperone in iron-sulfur cluster assembly in the cytoplasm. Also mediates complex formation between components of the cytosolic iron-sulfur biogenesis pathway and the CIA targeting complex composed of CIAO1, DIPK1B/FAM69B and MMS19 by binding directly to the scaffold protein ISCU and to CIAO1. This facilitates iron-sulfur cluster insertion into a number of cytoplasmic and nuclear proteins including POLD1, ELP3, DPYD and PPAT. In Homo sapiens (Human), this protein is Iron-sulfur cluster co-chaperone protein HscB.